An 85-amino-acid polypeptide reads, in one-letter code: Cytochrome c6 (85 aa).

Heme c contacts are provided by C14, C17, H18, and M58.

Belongs to the cytochrome c family. PetJ subfamily. As to quaternary structure, monomer. In terms of processing, binds 1 heme c group covalently per subunit.

It is found in the plastid. The protein localises to the chloroplast thylakoid lumen. Functions as an electron carrier between membrane-bound cytochrome b6-f and photosystem I in oxygenic photosynthesis. In Petalonia fascia (False kelp), this protein is Cytochrome c6 (petJ).